Consider the following 389-residue polypeptide: Putative DNA processing protein DprA (389 aa).

Belongs to the DprA/Smf family.

May help load RecA onto ssDNA. The protein is Putative DNA processing protein DprA of Mycobacterium tuberculosis (strain CDC 1551 / Oshkosh).